The chain runs to 50 residues: Large ribosomal subunit protein bL33B (50 aa).

The protein belongs to the bacterial ribosomal protein bL33 family.

This chain is Large ribosomal subunit protein bL33B, found in Mesomycoplasma hyopneumoniae (strain 7448) (Mycoplasma hyopneumoniae).